The primary structure comprises 704 residues: Elongation factor G (704 aa).

A tr-type G domain is found at 8-291 (DKVRNIGIMA…AVIDYLASPV (284 aa)). GTP contacts are provided by residues 17–24 (AHIDAGKT), 90–94 (DTPGH), and 144–147 (NKMD).

The protein belongs to the TRAFAC class translation factor GTPase superfamily. Classic translation factor GTPase family. EF-G/EF-2 subfamily.

It is found in the cytoplasm. In terms of biological role, catalyzes the GTP-dependent ribosomal translocation step during translation elongation. During this step, the ribosome changes from the pre-translocational (PRE) to the post-translocational (POST) state as the newly formed A-site-bound peptidyl-tRNA and P-site-bound deacylated tRNA move to the P and E sites, respectively. Catalyzes the coordinated movement of the two tRNA molecules, the mRNA and conformational changes in the ribosome. This Chlorobaculum parvum (strain DSM 263 / NCIMB 8327) (Chlorobium vibrioforme subsp. thiosulfatophilum) protein is Elongation factor G.